The chain runs to 303 residues: Bidirectional sugar transporter SWEET14 (303 aa).

Topologically, residues 1-9 (MAGMSLQHP) are extracellular. Residues 10–30 (WAFAFGLLGNIISFMTYLAPL) traverse the membrane as a helical segment. A MtN3/slv 1 domain is found at 13–98 (AFGLLGNIIS…AVYLVYAPKK (86 aa)). The Cytoplasmic portion of the chain corresponds to 31 to 44 (PTFYRIYKSKSTQG). A helical transmembrane segment spans residues 45–65 (FQSVPYVVALFSAMLWIYYAL). At 66 to 72 (LKSDECL) the chain is on the extracellular side. A helical transmembrane segment spans residues 73–93 (LITINSAGCVIETIYIAVYLV). Over 94 to 105 (YAPKKAKMFTAK) the chain is Cytoplasmic. The helical transmembrane segment at 106–126 (LLLLVNVGVFGLILLLTLLLS) threads the bilayer. Residues 127-133 (AGDRRIV) lie on the Extracellular side of the membrane. The helical transmembrane segment at 134–154 (VLGWVCVGFSVSVFVAPLSII) threads the bilayer. The region spanning 134–217 (VLGWVCVGFS…MGLYAMYRNS (84 aa)) is the MtN3/slv 2 domain. Residues 155–167 (RLVVRTKSVEFMP) are Cytoplasmic-facing. Residues 168-188 (FSLSFSLTISAVVWFLYGLLI) traverse the membrane as a helical segment. The Extracellular segment spans residues 189–192 (KDKY). Residues 193 to 213 (VALPNVLGFSFGVIQMGLYAM) traverse the membrane as a helical segment. At 214 to 303 (YRNSTPKAVL…AGAGEKKVAA (90 aa)) the chain is on the cytoplasmic side. The disordered stretch occupies residues 266-290 (HPVDVESPPAEAPPQEDDKAAAATA).

This sequence belongs to the SWEET sugar transporter family. As to quaternary structure, forms homooligomers and/or heterooligomers.

Its subcellular location is the cell membrane. In terms of biological role, mediates both low-affinity uptake and efflux of sugar across the plasma membrane. This Oryza sativa subsp. indica (Rice) protein is Bidirectional sugar transporter SWEET14 (SWEET14).